Consider the following 222-residue polypeptide: 3-dehydroquinate dehydratase (222 aa).

Residues 29–31 (ELR) and Arg-55 contribute to the 3-dehydroquinate site. His-112 acts as the Proton donor/acceptor in catalysis. The active-site Schiff-base intermediate with substrate is the Lys-139. 3 residues coordinate 3-dehydroquinate: Arg-178, Ser-199, and Gln-203.

This sequence belongs to the type-I 3-dehydroquinase family. In terms of assembly, homodimer.

It carries out the reaction 3-dehydroquinate = 3-dehydroshikimate + H2O. The protein operates within metabolic intermediate biosynthesis; chorismate biosynthesis; chorismate from D-erythrose 4-phosphate and phosphoenolpyruvate: step 3/7. Involved in the third step of the chorismate pathway, which leads to the biosynthesis of aromatic amino acids. Catalyzes the cis-dehydration of 3-dehydroquinate (DHQ) and introduces the first double bond of the aromatic ring to yield 3-dehydroshikimate. The chain is 3-dehydroquinate dehydratase from Dehalococcoides mccartyi (strain ATCC BAA-2266 / KCTC 15142 / 195) (Dehalococcoides ethenogenes (strain 195)).